The primary structure comprises 66 residues: Cold shock protein CspC (66 aa).

One can recognise a CSD domain in the interval 4 to 63; sequence GTVKWFNAEKGFGFIERENGDDVFVHFSAIQSDGFKSLDEGQKVSFDVEQGARGAQAANV.

The protein resides in the cytoplasm. The protein is Cold shock protein CspC (cspC) of Bacillus subtilis (strain 168).